A 184-amino-acid polypeptide reads, in one-letter code: Ribosome-recycling factor (184 aa).

The protein belongs to the RRF family.

Its subcellular location is the cytoplasm. Its function is as follows. Responsible for the release of ribosomes from messenger RNA at the termination of protein biosynthesis. May increase the efficiency of translation by recycling ribosomes from one round of translation to another. The sequence is that of Ribosome-recycling factor from Borrelia recurrentis (strain A1).